Consider the following 524-residue polypeptide: Casein kinase I homolog 3 (524 aa).

One can recognise a Protein kinase domain in the interval 14 to 319 (YAVGPKIGEG…YLISLMDDAL (306 aa)). ATP is bound by residues 20 to 28 (IGEGSFGVI) and Lys-60. Asp-150 acts as the Proton acceptor in catalysis. Disordered stretches follow at residues 352–414 (HGYG…KQQH) and 427–474 (PETH…EHNL). A compositionally biased stretch (low complexity) spans 360–373 (RVNGNTARNNVNTN). Polar residues-rich tracts occupy residues 374 to 413 (SKTR…TKQQ) and 429 to 474 (THSN…EHNL). The YXXZ targeting signal signature appears at 444 to 447 (YDSI). 7 S-palmitoyl cysteine lipidation sites follow: Cys-517, Cys-518, Cys-519, Cys-520, Cys-522, Cys-523, and Cys-524.

The protein belongs to the protein kinase superfamily. CK1 Ser/Thr protein kinase family. Casein kinase I subfamily.

The protein resides in the cell membrane. The protein localises to the nucleus membrane. It localises to the vacuole membrane. It carries out the reaction L-seryl-[protein] + ATP = O-phospho-L-seryl-[protein] + ADP + H(+). It catalyses the reaction L-threonyl-[protein] + ATP = O-phospho-L-threonyl-[protein] + ADP + H(+). Its function is as follows. Casein kinases are operationally defined by their preferential utilization of acidic proteins such as caseins as substrates. Phosphorylates MON1, inhibiting the guanine nucleotide exchange factor activity of the MON1-CCZ1 complex, possibly by preventing its recruitment to membranes by small GTPase RAB5 homologs. This chain is Casein kinase I homolog 3 (YCK3), found in Saccharomyces cerevisiae (strain ATCC 204508 / S288c) (Baker's yeast).